Reading from the N-terminus, the 153-residue chain is Regulatory protein RecX (153 aa).

Belongs to the RecX family.

It localises to the cytoplasm. In terms of biological role, modulates RecA activity. In Mannheimia succiniciproducens (strain KCTC 0769BP / MBEL55E), this protein is Regulatory protein RecX.